The primary structure comprises 122 residues: Large ribosomal subunit protein uL18 (122 aa).

The segment at 1–20 is disordered; sequence MFKKVSKNANRLSRHQRVRN.

Belongs to the universal ribosomal protein uL18 family. Part of the 50S ribosomal subunit; part of the 5S rRNA/L5/L18/L25 subcomplex. Contacts the 5S and 23S rRNAs.

In terms of biological role, this is one of the proteins that bind and probably mediate the attachment of the 5S RNA into the large ribosomal subunit, where it forms part of the central protuberance. In Alkaliphilus oremlandii (strain OhILAs) (Clostridium oremlandii (strain OhILAs)), this protein is Large ribosomal subunit protein uL18.